Reading from the N-terminus, the 350-residue chain is Methionine import ATP-binding protein MetN (350 aa).

The 240-residue stretch at 2–241 folds into the ABC transporter domain; the sequence is IQIKNLKKEY…PQAPVTRSFV (240 aa). 38 to 45 contributes to the ATP binding site; that stretch reads GHSGAGKS.

This sequence belongs to the ABC transporter superfamily. Methionine importer (TC 3.A.1.24) family. In terms of assembly, the complex is composed of two ATP-binding proteins (MetN), two transmembrane proteins (MetI) and a solute-binding protein (MetQ).

It localises to the cell inner membrane. The enzyme catalyses L-methionine(out) + ATP + H2O = L-methionine(in) + ADP + phosphate + H(+). It catalyses the reaction D-methionine(out) + ATP + H2O = D-methionine(in) + ADP + phosphate + H(+). Functionally, part of the ABC transporter complex MetNIQ involved in methionine import. Responsible for energy coupling to the transport system. This chain is Methionine import ATP-binding protein MetN, found in Francisella tularensis subsp. tularensis (strain SCHU S4 / Schu 4).